The primary structure comprises 305 residues: Thioredoxin reductase (305 aa).

Residue 28 to 35 participates in FAD binding; it reads LGIETSSQ. Cys129 and Cys132 form a disulfide bridge. 272–281 contributes to the FAD binding site; sequence DCCDWIYRQA.

It belongs to the class-II pyridine nucleotide-disulfide oxidoreductase family. As to quaternary structure, homodimer. FAD is required as a cofactor.

It localises to the cytoplasm. It carries out the reaction [thioredoxin]-dithiol + NADP(+) = [thioredoxin]-disulfide + NADPH + H(+). The polypeptide is Thioredoxin reductase (TRXB) (Spironucleus barkhanus).